Here is a 307-residue protein sequence, read N- to C-terminus: Acyl transferase (307 aa).

Active-site charge relay system residues include Ser116, Asp213, and His243.

It belongs to the LuxD family.

Its pathway is lipid metabolism; fatty acid reduction for biolumincescence. Functionally, acyl transferase is part of the fatty acid reductase system required for aldehyde biosynthesis; it produces fatty acids for the luminescent reaction. The sequence is that of Acyl transferase from Aliivibrio fischeri (strain ATCC 700601 / ES114) (Vibrio fischeri).